Consider the following 392-residue polypeptide: Formate-dependent phosphoribosylglycinamide formyltransferase (392 aa).

Residues Glu-15–Leu-16 and Glu-75 each bind N(1)-(5-phospho-beta-D-ribosyl)glycinamide. Residues Arg-107, Lys-148, Ser-153 to Gln-158, Glu-188 to Leu-191, and Glu-196 contribute to the ATP site. The ATP-grasp domain maps to Asp-112–Leu-302. Glu-261 and Glu-273 together coordinate Mg(2+). Residues Asp-280, Lys-350, and Arg-357–Arg-358 contribute to the N(1)-(5-phospho-beta-D-ribosyl)glycinamide site.

This sequence belongs to the PurK/PurT family. In terms of assembly, homodimer.

The enzyme catalyses N(1)-(5-phospho-beta-D-ribosyl)glycinamide + formate + ATP = N(2)-formyl-N(1)-(5-phospho-beta-D-ribosyl)glycinamide + ADP + phosphate + H(+). It participates in purine metabolism; IMP biosynthesis via de novo pathway; N(2)-formyl-N(1)-(5-phospho-D-ribosyl)glycinamide from N(1)-(5-phospho-D-ribosyl)glycinamide (formate route): step 1/1. Involved in the de novo purine biosynthesis. Catalyzes the transfer of formate to 5-phospho-ribosyl-glycinamide (GAR), producing 5-phospho-ribosyl-N-formylglycinamide (FGAR). Formate is provided by PurU via hydrolysis of 10-formyl-tetrahydrofolate. This Prochlorococcus marinus (strain MIT 9303) protein is Formate-dependent phosphoribosylglycinamide formyltransferase.